The following is a 185-amino-acid chain: Ribosome-recycling factor (185 aa).

This sequence belongs to the RRF family.

The protein resides in the cytoplasm. Functionally, responsible for the release of ribosomes from messenger RNA at the termination of protein biosynthesis. May increase the efficiency of translation by recycling ribosomes from one round of translation to another. This Streptococcus equi subsp. equi (strain 4047) protein is Ribosome-recycling factor.